Consider the following 407-residue polypeptide: Inhibin beta B chain (407 aa).

An N-terminal signal peptide occupies residues 1–28 (MDGLPGRALGAACLLLLAAGWLGPEAWG). A disordered region spans residues 27–60 (WGSPTPPPSPAAPPPPPPPGALGGSQDTCTSCGG). The propeptide occupies 29–292 (SPTPPPSPAA…VDSRHRIRKR (264 aa)). The span at 30–46 (PTPPPSPAAPPPPPPPG) shows a compositional bias: pro residues. Asn93 carries an N-linked (GlcNAc...) asparagine glycan. Disulfide bonds link Cys296–Cys304, Cys303–Cys372, Cys332–Cys404, and Cys336–Cys406.

This sequence belongs to the TGF-beta family. Dimeric, linked by one or more disulfide bonds. Inhibin B is a dimer of alpha and beta-B. Activin B is a homodimer of beta-B. Activin AB is a dimer of beta-A and beta-B. Interacts with FST and FSTL3.

It is found in the secreted. Its function is as follows. Inhibins and activins inhibit and activate, respectively, the secretion of follitropin by the pituitary gland. Inhibins/activins are involved in regulating a number of diverse functions such as hypothalamic and pituitary hormone secretion, gonadal hormone secretion, germ cell development and maturation, erythroid differentiation, insulin secretion, nerve cell survival, embryonic axial development or bone growth, depending on their subunit composition. Inhibins appear to oppose the functions of activins. Functionally, activin B is a dimer of alpha and beta-B that plays a role in several essential biological processes including embryonic development, stem cell maintenance and differentiation, haematopoiesis, cell proliferation and wound healing. Signals through type I receptor ACVR1C, abundantly expressed in pancreatic beta cells, and type II receptors like ACVR2A. Upon ligand binding, these receptors phosphorylate intracellular signaling mediators SMAD2 and SMAD3, which form a complex with SMAD4, translocate to the nucleus, and regulate gene expression. Plays a crucial role in the induction of hepcidin by inflammation through activation of ACVR1C and subsequent phosphorylation of SMAD1/5/8. Regulates adipocyte lipid metabolism by decreasing non-esterified fatty acids and glycerol release and increases intracellular triglyceride content. Stimulates wound healing by promoting cell migration and hair follicle regeneration through the JNK and ERK signaling pathways downstream of RHOA. In terms of biological role, inhibin B is a dimer of alpha and beta-B that plays a crucial role in the regulation of the reproductive system by inhibiting the secretion of follicle-stimulating hormone (FSH) from the anterior pituitary gland. Thereby, maintains reproductive homeostasis in both males and females. Acts as a more potent suppressor of FSH release than inhibin A. Functions as competitive receptor antagonist binding activin type II receptors with high affinity in the presence of the TGF-beta type III coreceptor/TGFBR3L. The chain is Inhibin beta B chain (INHBB) from Sus scrofa (Pig).